Consider the following 666-residue polypeptide: MRAVRAETPARELFRDAAFPASDSSLFYNLSTPLAQFREDITWRRPQEICATPQLFPDNPWEGQVKQGLLGDCWFLCACAALQKSQHLLDQVFPPGQPGWSDQKYQGFFTCRIWQFGHWEEVTIDDRLPCLAGRLCFSRCQREDVFWLPLLEKAYAKVHGSYEHLWAGQVADALVDLTGSLAERWSLKDVTKASGQQDRPSGGEHRTCRQLLHLKDRCLISCSVLSPRAGARELGEFHAFIISDLQELRSQTGQGILLLRIHNPWGRRCWQGLWREGGEGWNQVEPAKESELLAQLQEGEFWVEEEEFLREFDEVTIGYPVTEAGHLQSLHTERVLCHTRTLPGAWVTGQSAGGCRNNSCFPCNPKFWLRLLEPSEVCVAVLQRPRRRLVGQTRALAGASPAPVNLPGKDYQAVGLHIWKVEKRKISLPRVLSAPPVAGTACHAYDREIHLRCELSPGYYLAVPSTFLKDVPGQFLLRVFSTGKISLSAVRLATKGASPGTALPAGEWETVQLQGCWRAGQTAGGSRNFASYPCNPCLPFSVPEGAGPRYIRITLQQHCRLSDSQLHPIGFHVFQVPADGENQDACSLLLQEPLLSCVPHRYAQEVSRLCLLSVGNYRIVPSTYLPDTEGTFTVTIATRIDRQSIHSQEMLGQLLQEVSFMAVMKA.

Positions 13–321 (LFRDAAFPAS…FDEVTIGYPV (309 aa)) constitute a Calpain catalytic domain. Active-site residues include Cys-73, His-238, and Asn-263. Domain III stretches follow at residues 322 to 488 (TEAG…ISLS) and 507 to 648 (EWET…IHSQ).

The protein belongs to the peptidase C2 family.

Its function is as follows. Calcium-regulated non-lysosomal thiol-protease which catalyzes limited proteolysis of substrates involved in cytoskeletal remodeling and signal transduction. May play a role in insulin-stimulated glucose uptake. The polypeptide is Calpain-10 (Capn10) (Mus musculus (Mouse)).